Here is a 495-residue protein sequence, read N- to C-terminus: UDP-N-acetylmuramoyl-L-alanyl-D-glutamate--2,6-diaminopimelate ligase (495 aa).

Residues leucine 27, serine 29, and 44 to 46 each bind UDP-N-acetyl-alpha-D-muramoyl-L-alanyl-D-glutamate; that span reads HQA. Residue 116-122 coordinates ATP; the sequence is GTNGKTT. UDP-N-acetyl-alpha-D-muramoyl-L-alanyl-D-glutamate-binding positions include asparagine 157, 158 to 159, serine 185, glutamine 191, and arginine 193; that span reads TT. The residue at position 225 (lysine 225) is an N6-carboxylysine. Meso-2,6-diaminopimelate contacts are provided by residues arginine 390, 414–417, glycine 465, and glutamate 469; that span reads DNPR. The short motif at 414 to 417 is the Meso-diaminopimelate recognition motif element; sequence DNPR.

Belongs to the MurCDEF family. MurE subfamily. Mg(2+) serves as cofactor. Post-translationally, carboxylation is probably crucial for Mg(2+) binding and, consequently, for the gamma-phosphate positioning of ATP.

The protein localises to the cytoplasm. It catalyses the reaction UDP-N-acetyl-alpha-D-muramoyl-L-alanyl-D-glutamate + meso-2,6-diaminopimelate + ATP = UDP-N-acetyl-alpha-D-muramoyl-L-alanyl-gamma-D-glutamyl-meso-2,6-diaminopimelate + ADP + phosphate + H(+). The protein operates within cell wall biogenesis; peptidoglycan biosynthesis. In terms of biological role, catalyzes the addition of meso-diaminopimelic acid to the nucleotide precursor UDP-N-acetylmuramoyl-L-alanyl-D-glutamate (UMAG) in the biosynthesis of bacterial cell-wall peptidoglycan. In Shigella flexneri, this protein is UDP-N-acetylmuramoyl-L-alanyl-D-glutamate--2,6-diaminopimelate ligase.